Here is a 222-residue protein sequence, read N- to C-terminus: Adenylate kinase (222 aa).

Residue Ser2 is a propeptide, removed in mature form. Ser2 and Ser3 each carry N-acetylserine. Residue 16–21 (GAGKGT) participates in ATP binding. Positions 36-65 (ATGDMLRSQIAKGTQLGLEAKKIMDQGGLV) are NMP. Residues Thr37, Arg42, 63–65 (GLV), 92–95 (GFPR), and Gln99 contribute to the AMP site. The interval 133–170 (GRLIHPASGRSYHKIFNPPKEDMKDDVTGEALVQRSDD) is LID. ATP-binding positions include Arg134 and 143–144 (SY). AMP-binding residues include Arg167 and Arg178. Residue Gln206 coordinates ATP.

The protein belongs to the adenylate kinase family. AK2 subfamily. Monomer.

It localises to the cytoplasm. The protein resides in the cytosol. The protein localises to the mitochondrion intermembrane space. The catalysed reaction is AMP + ATP = 2 ADP. Functionally, catalyzes the reversible transfer of the terminal phosphate group between ATP and AMP. Plays an important role in cellular energy homeostasis and in adenine nucleotide metabolism. Adenylate kinase activity is critical for regulation of the phosphate utilization and the AMP de novo biosynthesis pathways. The sequence is that of Adenylate kinase from Saccharomyces cerevisiae (strain RM11-1a) (Baker's yeast).